A 488-amino-acid polypeptide reads, in one-letter code: Ribulose bisphosphate carboxylase large chain (488 aa).

2 residues coordinate substrate: asparagine 128 and threonine 178. Lysine 180 serves as the catalytic Proton acceptor. Residue lysine 182 participates in substrate binding. Mg(2+)-binding residues include lysine 206, aspartate 208, and glutamate 209. N6-carboxylysine is present on lysine 206. Histidine 298 acts as the Proton acceptor in catalysis. Residues arginine 299, histidine 331, and serine 383 each contribute to the substrate site.

This sequence belongs to the RuBisCO large chain family. Type I subfamily. In terms of assembly, heterohexadecamer of 8 large chains and 8 small chains. Requires Mg(2+) as cofactor.

It catalyses the reaction 2 (2R)-3-phosphoglycerate + 2 H(+) = D-ribulose 1,5-bisphosphate + CO2 + H2O. The catalysed reaction is D-ribulose 1,5-bisphosphate + O2 = 2-phosphoglycolate + (2R)-3-phosphoglycerate + 2 H(+). RuBisCO catalyzes two reactions: the carboxylation of D-ribulose 1,5-bisphosphate, the primary event in carbon dioxide fixation, as well as the oxidative fragmentation of the pentose substrate. Both reactions occur simultaneously and in competition at the same active site. The sequence is that of Ribulose bisphosphate carboxylase large chain from Xanthobacter autotrophicus (strain ATCC BAA-1158 / Py2).